Here is a 360-residue protein sequence, read N- to C-terminus: MILLGSSGSIGKNVAFLAMKYGIKLDALACKTDYKELNSQISKFNPKFVYIEDNKLKNLVEHSRVFTSKDGIDKFLEACYDEFGSTVVINSLVGFSGLRPSLVSQKLGFKLALANKESLVAGGKFLDTKSINPIDSEHFGLKFLLKNRPAVKKMIITASGGAFYDMHINELEFVTAKSALKHPNWSMGAKITIDSATMANKLFEVLEAYHLYGIKDIDAFIERTSCIHALISFMDGSTTAHISRTDMKLAIAHAIGLEEKEILEPIDILSLKNISFNTINLKKYPIFTLKKDVLNNPDLGVIINAANEEMVYKFLNNEISFLDINRAVFKSLDKFGSVKIDDEDTVFEIDKKVREFCKGF.

S7, G8, S9, I10, and N115 together coordinate NADPH. 1-deoxy-D-xylulose 5-phosphate is bound at residue K116. E117 is an NADPH binding site. D135 contacts Mn(2+). Residues S136, E137, S159, and H182 each contribute to the 1-deoxy-D-xylulose 5-phosphate site. Position 137 (E137) interacts with Mn(2+). G188 lines the NADPH pocket. The 1-deoxy-D-xylulose 5-phosphate site is built by S195, N200, K201, and E204. Position 204 (E204) interacts with Mn(2+).

The protein belongs to the DXR family. Mg(2+) serves as cofactor. It depends on Mn(2+) as a cofactor.

The catalysed reaction is 2-C-methyl-D-erythritol 4-phosphate + NADP(+) = 1-deoxy-D-xylulose 5-phosphate + NADPH + H(+). Its pathway is isoprenoid biosynthesis; isopentenyl diphosphate biosynthesis via DXP pathway; isopentenyl diphosphate from 1-deoxy-D-xylulose 5-phosphate: step 1/6. In terms of biological role, catalyzes the NADPH-dependent rearrangement and reduction of 1-deoxy-D-xylulose-5-phosphate (DXP) to 2-C-methyl-D-erythritol 4-phosphate (MEP). The protein is 1-deoxy-D-xylulose 5-phosphate reductoisomerase of Campylobacter fetus subsp. fetus (strain 82-40).